The chain runs to 761 residues: Copper-exporting P-type ATPase (761 aa).

Thr2 bears the N-acetylthreonine mark. Positions 14-78 constitute an HMA domain; it reads QRIQLRISGM…AVRRAGYQAD (65 aa). Positions 25 and 28 each coordinate Cu(+). The next 6 membrane-spanning stretches (helical) occupy residues 102 to 122, 129 to 149, 164 to 184, 199 to 219, 361 to 381, and 387 to 407; these read LAIAAVLFVPVADLSVMFGVV, GWQWVLSALALPVVTWAAWPF, METLISVGITAATIWSLYTVF, LLGSDAIYFEVAAGVTVFVLV, VFVPAVLVIAALTAAGWLIAG, and AVSAALAVLVIACPCALGLAT. The 4-aspartylphosphate intermediate role is filled by Asp443. A run of 2 helical transmembrane segments spans residues 695–714 and 718–735; these read MVWAFGYNIAAIPVAAAGLL and VAGAAMAFSSFFVVSNSL.

This sequence belongs to the cation transport ATPase (P-type) (TC 3.A.3) family. Type IB subfamily.

Its subcellular location is the cell membrane. It catalyses the reaction Cu(+)(in) + ATP + H2O = Cu(+)(out) + ADP + phosphate + H(+). Its activity is regulated as follows. ATPase activity is stimulated by Cu(+) ions. Involved in copper export. Could be involved in the copper detoxification of mycobacterial cells. The protein is Copper-exporting P-type ATPase (ctpA) of Mycobacterium tuberculosis (strain ATCC 25618 / H37Rv).